The following is a 527-amino-acid chain: Zinc finger C2HC domain-containing protein 1C (527 aa).

Disordered regions lie at residues 18–105 (HNKT…GQGK) and 145–170 (VHRK…LPDS). A compositionally biased stretch (polar residues) spans 50 to 61 (NSFQSKLWSNTE). Basic residues predominate over residues 71-85 (RPKRNVCTKARRHSC). A compositionally biased stretch (low complexity) spans 93-102 (QQGSGNNAQG). Residues 207-254 (TQIQRLEAAGESLQKEIRRKEILLQEKLKKTEEGLRRMQKEKKQAIFQ) are a coiled coil. Disordered stretches follow at residues 264–316 (LPRR…LSDY) and 352–379 (LGST…EPEL). A compositionally biased stretch (basic and acidic residues) spans 286-298 (FRSEVFSRNRGED). The span at 301 to 312 (CDQAQENPSPRQ) shows a compositional bias: polar residues. A compositionally biased stretch (low complexity) spans 358-374 (ESSRSGTPGSSGSSSST). 2 consecutive C2HC/C3H-type zinc fingers follow at residues 378 to 407 (ELAK…MQGS) and 489 to 518 (DYVQ…IKNR). Residues C382, C385, H397, C401, C493, C496, H508, and C512 each contribute to the Zn(2+) site. Residues 507–527 (RHIPKCKTIKNRPPPPRRHDS) form a disordered region.

Belongs to the ZC2HC1 family. The cofactor is Zn(2+).

This Mus musculus (Mouse) protein is Zinc finger C2HC domain-containing protein 1C (Zc2hc1c).